The following is a 176-amino-acid chain: Skp1-related protein (176 aa).

It belongs to the SKP1 family. In terms of assembly, probable component of the SCF(sel-10) E3 ubiquitin-protein ligase complex containing F-box domain-containing protein sel-10 as the substrate recognition component. Interacts with cul-1. May interact with the F-box protein mec-15. Interacts with dre-1. Interacts with syg-1. Interacts with sel-10. In terms of tissue distribution, ubiquitously expressed in the adult.

Functionally, probable essential component of SCF (SKP1-CUL1-F-box protein) E3 ubiquitin-protein ligase complexes, which mediate the ubiquitination and subsequent proteasomal degradation of target proteins. Regulates cell proliferation during embryonic and larval development. Involved in synapse elimination in early synapse development. May negatively regulate the apoptotic activity of cep-1 in response to genotoxic stress. Plays a role in sex determination. This is Skp1-related protein from Caenorhabditis elegans.